Here is a 586-residue protein sequence, read N- to C-terminus: Phosphoenolpyruvate-protein phosphotransferase (586 aa).

His201 acts as the Tele-phosphohistidine intermediate in catalysis. Residues Arg308 and Arg345 each coordinate phosphoenolpyruvate. 2 residues coordinate Mg(2+): Glu446 and Asp470. Residues 469–470 (ND) and Arg480 each bind phosphoenolpyruvate. The Proton donor role is filled by Cys517.

The protein belongs to the PEP-utilizing enzyme family. As to quaternary structure, homodimer. Requires Mg(2+) as cofactor.

The protein localises to the cytoplasm. It catalyses the reaction L-histidyl-[protein] + phosphoenolpyruvate = N(pros)-phospho-L-histidyl-[protein] + pyruvate. Its function is as follows. General (non sugar-specific) component of the phosphoenolpyruvate-dependent sugar phosphotransferase system (sugar PTS). This major carbohydrate active-transport system catalyzes the phosphorylation of incoming sugar substrates concomitantly with their translocation across the cell membrane. Enzyme I transfers the phosphoryl group from phosphoenolpyruvate (PEP) to the phosphoryl carrier protein (HPr). The protein is Phosphoenolpyruvate-protein phosphotransferase of Cupriavidus necator (strain ATCC 17699 / DSM 428 / KCTC 22496 / NCIMB 10442 / H16 / Stanier 337) (Ralstonia eutropha).